A 353-amino-acid polypeptide reads, in one-letter code: B1 bradykinin receptor (353 aa).

At 1 to 41 the chain is on the extracellular side; sequence MASQTLVVFQASNQSQLPPPNATLCDGAQEAWHLLHKVLPT. Residues Asn13 and Asn21 are each glycosylated (N-linked (GlcNAc...) asparagine). Residues 42–62 traverse the membrane as a helical segment; sequence CVVAICSGGLLGNLFVLSVFL. Over 63 to 72 the chain is Cytoplasmic; that stretch reads VPRRRLNAAE. Residues 73–93 form a helical membrane-spanning segment; sequence IYLAHLAASDLVFALGLPFWA. The Extracellular portion of the chain corresponds to 94–110; the sequence is ETIRNGFHWPFGAPLCR. Residues Cys109 and Cys189 are joined by a disulfide bond. Residues 111–131 traverse the membrane as a helical segment; the sequence is VVNGVIKANLFISIFLVVAIS. Residues 132-154 are Cytoplasmic-facing; the sequence is RDRYRALVHPVASWRRRRRRHWA. Residues 155-175 traverse the membrane as a helical segment; the sequence is QATCVLIWTAGGLLSIPTFLL. Residues 176-207 are Extracellular-facing; that stretch reads RSVQVVPELNVSACVLPFPHEAWAFVRTVELN. N-linked (GlcNAc...) asparagine glycosylation occurs at Asn185. A helical membrane pass occupies residues 208-228; sequence VLGFLLPLAAILFFNYHILAA. The Cytoplasmic portion of the chain corresponds to 229–251; that stretch reads LRGREQLSRTRCGGPRDGKTTAL. Residues 252–272 form a helical membrane-spanning segment; the sequence is ILTLVAVFLLCWTPYHVCAFL. Topologically, residues 273 to 295 are extracellular; that stretch reads EFLLHVRAIRGCFWEDFTDLGLQ. Residues 296–316 form a helical membrane-spanning segment; sequence YTNFFAFINSCLNPVIYVFWG. The Cytoplasmic segment spans residues 317 to 353; that stretch reads QLFRTKIWELYHRCLPRKLTAVSSSRRKEIFQIFWRN. Residue Cys330 is the site of S-palmitoyl cysteine attachment.

The protein belongs to the G-protein coupled receptor 1 family. Bradykinin receptor subfamily. BDKRB1 sub-subfamily.

It is found in the cell membrane. Its function is as follows. This is a receptor for bradykinin. Could be a factor in chronic pain and inflammation. The sequence is that of B1 bradykinin receptor (BDKRB1) from Sus scrofa (Pig).